We begin with the raw amino-acid sequence, 466 residues long: Uronate isomerase (466 aa).

The protein belongs to the metallo-dependent hydrolases superfamily. Uronate isomerase family.

The catalysed reaction is D-glucuronate = D-fructuronate. It carries out the reaction aldehydo-D-galacturonate = keto-D-tagaturonate. Its pathway is carbohydrate metabolism; pentose and glucuronate interconversion. This chain is Uronate isomerase, found in Brucella canis (strain ATCC 23365 / NCTC 10854 / RM-666).